The primary structure comprises 486 residues: Cardiolipin synthase A (486 aa).

2 helical membrane-spanning segments follow: residues 3-23 and 38-58; these read TFYT…IASV and MAWL…YLSF. 2 PLD phosphodiesterase domains span residues 219 to 246 and 399 to 426; these read MDLR…VDPR and EGGL…DMRS. Active-site residues include His224, Lys226, Asp231, His404, Lys406, and Asp411.

This sequence belongs to the phospholipase D family. Cardiolipin synthase subfamily. ClsA sub-subfamily.

The protein localises to the cell inner membrane. It carries out the reaction 2 a 1,2-diacyl-sn-glycero-3-phospho-(1'-sn-glycerol) = a cardiolipin + glycerol. In terms of biological role, catalyzes the reversible phosphatidyl group transfer from one phosphatidylglycerol molecule to another to form cardiolipin (CL) (diphosphatidylglycerol) and glycerol. The chain is Cardiolipin synthase A from Edwardsiella ictaluri (strain 93-146).